The sequence spans 377 residues: Histone deacetylase 8 (377 aa).

Positions 14-324 are histone deacetylase; sequence LPPVYIYSPE…WTYLTGVILG (311 aa). S39 is modified (phosphoserine). Substrate is bound at residue D101. The active-site Proton acceptor is H143. G151 lines the substrate pocket. Residues D178, H180, and D267 each coordinate a divalent metal cation. Y306 lines the substrate pocket.

The protein belongs to the histone deacetylase family. HD type 1 subfamily. As to quaternary structure, interacts with CBFA2T3. Interacts with phosphorylated SMG5/EST1B; this interaction protects SMG5 from ubiquitin-mediated degradation. Associates with alpha-SMA (smooth muscle alpha-actin). Requires a divalent metal cation as cofactor. Post-translationally, phosphorylated by PKA on serine 39. Phosphorylation reduces deacetylase activity observed preferentially on histones H3 and H4.

It is found in the nucleus. Its subcellular location is the chromosome. It localises to the cytoplasm. The catalysed reaction is N(6)-acetyl-L-lysyl-[histone] + H2O = L-lysyl-[histone] + acetate. It carries out the reaction N(6)-acetyl-L-lysyl-[protein] + H2O = L-lysyl-[protein] + acetate. The enzyme catalyses N(6)-(2E)-butenoyl-L-lysyl-[protein] + H2O = (2E)-2-butenoate + L-lysyl-[protein]. With respect to regulation, its activity is inhibited by trichostatin A (TSA) and butyrate, 2 well known histone deacetylase inhibitors. histone deacetylase inhibitor. Functionally, histone deacetylase that catalyzes the deacetylation of lysine residues on the N-terminal part of the core histones (H2A, H2B, H3 and H4). Histone deacetylation gives a tag for epigenetic repression and plays an important role in transcriptional regulation, cell cycle progression and developmental events. Histone deacetylases act via the formation of large multiprotein complexes. Also involved in the deacetylation of cohesin complex protein SMC3 regulating release of cohesin complexes from chromatin. May play a role in smooth muscle cell contractility. In addition to protein deacetylase activity, also has protein-lysine deacylase activity: acts as a protein decrotonylase by mediating decrotonylation ((2E)-butenoyl) of histones. The sequence is that of Histone deacetylase 8 (Hdac8) from Mus musculus (Mouse).